The chain runs to 433 residues: MDDDEYAKLIRRMNPPRVVIDNNASDDATVIQVDSVNKHGTLLEVVQVLTDMNLVIKKAYISSDGGWFMDVFKVIDQDGNKIRDTQVLDYIQKRIESNAGWFIPPLRSSVGVMPTDEYTSIELAGTDRPGLLSEVSAVLTDLHCNVVNAEIWTHNTRAAAVIHVTDNSTHSAITDPIRLSTIKELLCNVVRTNSGSRAAKTVFSCSDTHRERRLHQIMFDDRDYEGVKRARTSASRPSVTLMNIEKDYTVVTMRSKDRPKLVFDVVCTLTDMQYVVFHGMVSTEPVEAYQEFYIRHVDGLPINSEAEQERVIQCLEAAIERRASEGLELELSAEDRVGLLSDITRTFRENSLTIVRAEISTREGKAKDTFYVTDVTGNPVESKIVESIRQQIGVSKLKVKKKEKEHCSVLGTSRPSHETTTMGYLLSNIFKPK.

4 consecutive ACT domains span residues 30–110 (VIQV…RSSV), 120–207 (SIEL…SCSD), 250–326 (VVTM…ASEG), and 328–402 (ELEL…VKKK).

Functionally, may bind amino acids. The polypeptide is ACT domain-containing protein ACR6 (Arabidopsis thaliana (Mouse-ear cress)).